Reading from the N-terminus, the 290-residue chain is Cell division protein ZipA (290 aa).

Residue Met-1 is a topological domain, periplasmic. The helical transmembrane segment at 2–22 (DIGLREWLIVIGLIVIAGILF) threads the bilayer. Residues 23-290 (DGWRRMRGGK…HERRSLMQKR (268 aa)) lie on the Cytoplasmic side of the membrane. Positions 66–143 (REPSFDEQDL…REKAPSVAAA (78 aa)) are disordered. A compositionally biased stretch (basic and acidic residues) spans 81–99 (REGKERKGGKRQDEPRQGD). A compositionally biased stretch (acidic residues) spans 100-114 (LDLDEGMALEADPSD).

It belongs to the ZipA family. In terms of assembly, interacts with FtsZ via their C-terminal domains.

The protein resides in the cell inner membrane. Its function is as follows. Essential cell division protein that stabilizes the FtsZ protofilaments by cross-linking them and that serves as a cytoplasmic membrane anchor for the Z ring. Also required for the recruitment to the septal ring of downstream cell division proteins. This is Cell division protein ZipA from Pseudomonas paraeruginosa (strain DSM 24068 / PA7) (Pseudomonas aeruginosa (strain PA7)).